Consider the following 1711-residue polypeptide: Protein chiffon (1711 aa).

3 disordered regions span residues 1-31 (MQPQ…AATP), 87-129 (KPEV…SRAD), and 244-307 (TKSK…IDSS). The sufficient for interaction with and activation of Cdc7 stretch occupies residues 1–400 (MQPQSDKQSA…PALREKSKRI (400 aa)). Composition is skewed to low complexity over residues 10-30 (ASRL…TAAT) and 97-109 (TPGT…TPTS). A phosphoserine mark is found at S306 and S307. The DBF4-type zinc finger occupies 307–356 (SEKQGGVCEICKLEYDILNIHLQSKDHELFAKNSDNFLALDTLIQSSADV). 4 residues coordinate Zn(2+): C314, C317, H327, and H333. Residues 365–378 (VESELDMDVDESLS) show a composition bias toward acidic residues. Disordered regions lie at residues 365-507 (VESE…DSPS), 531-647 (MFPR…KPQL), 733-771 (LDEE…REQR), 791-817 (TEVK…KVKQ), 908-945 (QDKG…YKNK), 1005-1025 (RSTS…CRNK), 1055-1157 (QRQD…RNQS), 1271-1290 (ESEG…PPTD), 1303-1329 (MGSA…RMSN), 1343-1370 (LKSN…ALPD), and 1383-1644 (LHPI…SKYA). A phosphoserine mark is found at S406, S407, S417, S432, and S435. Positions 429–439 (QGNSPGSLSEL) are enriched in polar residues. The span at 445–454 (PTTAAATPTT) shows a compositional bias: low complexity. Phosphoserine is present on S467. A DNA-binding region (a.T hook) is located at residues 493–505 (PRGRGRPPNQVDS). Residues 537 to 546 (VPTTRSSSEL) are compositionally biased toward polar residues. 3 positions are modified to phosphoserine: S542, S543, and S544. Residues 549–560 (DVDRQTTSDVRG) are compositionally biased toward basic and acidic residues. Low complexity predominate over residues 563–575 (SISSASLDTSTSE). Over residues 588 to 601 (IRKRAQAVGRRRKV) the composition is skewed to basic residues. Positions 793–812 (VKTSPSKSRTKIQKPSSPTK) are enriched in polar residues. The segment covering 908-932 (QDKGEQIKLEDQKPAPKKEVKKEEE) has biased composition (basic and acidic residues). Low complexity predominate over residues 1006–1018 (STSSSSCSNSQRS). T1081 carries the post-translational modification Phosphothreonine. Phosphoserine is present on residues S1091 and S1092. Residues 1092–1101 (SPRTTRSQAA) are compositionally biased toward polar residues. The segment covering 1398-1407 (TTTTTTTTTT) has biased composition (low complexity). A sufficient for interaction with Gcn5 region spans residues 1400-1695 (TTTTTTTTSA…NAWRRTQRRA (296 aa)). Residues 1435-1445 (ADDKQNSREDA) show a composition bias toward basic and acidic residues. Composition is skewed to acidic residues over residues 1453 to 1475 (DVDE…DETM) and 1483 to 1518 (QDVE…EEQD). 2 stretches are compositionally biased toward polar residues: residues 1536–1545 (ISVTTPPEDS) and 1556–1591 (HNGQ…SCIS).

In terms of assembly, component of the Dbf4-dependent kinase (DDK) complex consisting of Cdc7 and the Dbf4 ortholog chif. Interacts with Cdc7; the interaction is direct. Interacts with CG5790. Component of the Chiffon histone acetyltransferase (CHAT) complex consisting of Ada3, Sgf29, Gcn5, chif/chiffon and Ada2b (Isoform A). Interacts (via C-terminus) with Gcn5; the interaction is direct but weak in the absence of other CHAT components. In terms of processing, may be proteolytically cleaved to produce a N-terminal 50 kDa product.

Its subcellular location is the nucleus. Functionally, a bicistronic gene producing two proteins that are components of different complexes and have separate properties and functions. Full-length protein is proteolytically cleaved, producing a ~50kDa N-terminal product (Chiffon-A) that forms part of the DDK complex; it is unclear if the C-terminal proteolytic product is stable or functional. Alternative initiation from an internal ribosome entry site produces a C-terminal ~48kDa product (Chiffon-B or Isoform E) that forms part of the CHAT complex. Involved in regulation of gene expression during embryonic development. In terms of biological role, regulatory component of the Dbf4-dependent kinase (DDK) complex. Required for the amplification stage, but not the preceding endoreplication stage of DNA replication in egg chamber follicle cells of the ovary. May be involved in initiation of DNA replication; activation of the chorion gene origins. May have a role in eye and thoracic bristle development. Required for female fertility; is not required for oogenesis but is required maternally for early embryo development. Its function is as follows. Component of the CHAT histone acetyltransferase complex, which predominantly acetylates histone H3. As part of the CHAT complex involved in acetylation of histone H3 on 'Lys-10' (H3K9ac), 'Lys-15' (H3K14ac) and 'Lys-19' (H3K18ac), but not 'Lys-25' (H3K24ac). May also regulate other histone acetyltransferase complexes. Essential for viability. Not required for early stages of embryonic development. May be involved in zygotic genome activation during embryogenesis. The sequence is that of Protein chiffon from Drosophila melanogaster (Fruit fly).